Reading from the N-terminus, the 166-residue chain is Co-chaperone protein HscB homolog (166 aa).

One can recognise a J domain in the interval 3 to 75 (QYFTLFRIEP…IDRAAYLLKT (73 aa)).

This sequence belongs to the HscB family. In terms of assembly, interacts with HscA and stimulates its ATPase activity.

In terms of biological role, co-chaperone involved in the maturation of iron-sulfur cluster-containing proteins. Seems to help targeting proteins to be folded toward HscA. The polypeptide is Co-chaperone protein HscB homolog (Neisseria meningitidis serogroup A / serotype 4A (strain DSM 15465 / Z2491)).